An 81-amino-acid chain; its full sequence is Short neurotoxin SN160 (81 aa).

The N-terminal stretch at 1-21 (MKTLLLTLVVVTIVCLDLGYT) is a signal peptide. 4 disulfides stabilise this stretch: Cys-24/Cys-43, Cys-38/Cys-60, Cys-62/Cys-73, and Cys-74/Cys-79.

This sequence belongs to the three-finger toxin family. Short-chain subfamily. Type I alpha-neurotoxin sub-subfamily. As to expression, expressed by the venom gland.

It localises to the secreted. Functionally, binds to muscle nicotinic acetylcholine receptor (nAChR) and inhibit acetylcholine from binding to the receptor, thereby impairing neuromuscular transmission. The sequence is that of Short neurotoxin SN160 from Hydrophis hardwickii (Hardwick's spine-bellied seasnake).